The primary structure comprises 186 residues: Glutathione S-transferase 1, isoform A (186 aa).

One can recognise a GST N-terminal domain in the interval 1 to 81 (MDFYYLPGSA…YLVEKYCAHD (81 aa)). Residues Ser9, 50–52 (HCI), and 65–67 (ESR) each bind glutathione. Positions 92-186 (DPRRRAVVHQ…RRCRVRSAAI (95 aa)) constitute a GST C-terminal domain.

It belongs to the GST superfamily. Theta family. Homodimer.

The enzyme catalyses RX + glutathione = an S-substituted glutathione + a halide anion + H(+). Conjugation of reduced glutathione to a wide number of exogenous and endogenous hydrophobic electrophiles. The sequence is that of Glutathione S-transferase 1, isoform A from Anopheles gambiae (African malaria mosquito).